The sequence spans 470 residues: Aspartate-semialdehyde dehydrogenase 1 (470 aa).

Positions 145 and 171 each coordinate NAD(+). Asp243 is a catalytic residue. An NAD(+)-binding site is contributed by Gly245. The active site involves Cys277. Residue Glu371 coordinates NAD(+).

Belongs to the aldehyde dehydrogenase family.

The catalysed reaction is L-aspartate 4-semialdehyde + NAD(+) + H2O = L-aspartate + NADH + 2 H(+). Functionally, dehydrogenase involved in the degradation of canavanine, the delta-oxa-analog of arginine, allowing growth on canavanine as sole nitrogen and carbon source. Probably catalyzes the NAD(+)-dependent oxidation of L-aspartate-semialdehyde to L-aspartate. The sequence is that of Aspartate-semialdehyde dehydrogenase 1 from Pseudomonas canavaninivorans.